We begin with the raw amino-acid sequence, 930 residues long: Isoleucine--tRNA ligase (930 aa).

Positions proline 57–histidine 67 match the 'HIGH' region motif. Glutamate 554 provides a ligand contact to L-isoleucyl-5'-AMP. Residues lysine 595 to serine 599 carry the 'KMSKS' region motif. An ATP-binding site is contributed by lysine 598. Residues cysteine 888, cysteine 891, cysteine 908, and cysteine 911 each contribute to the Zn(2+) site.

It belongs to the class-I aminoacyl-tRNA synthetase family. IleS type 1 subfamily. As to quaternary structure, monomer. It depends on Zn(2+) as a cofactor.

Its subcellular location is the cytoplasm. It catalyses the reaction tRNA(Ile) + L-isoleucine + ATP = L-isoleucyl-tRNA(Ile) + AMP + diphosphate. Catalyzes the attachment of isoleucine to tRNA(Ile). As IleRS can inadvertently accommodate and process structurally similar amino acids such as valine, to avoid such errors it has two additional distinct tRNA(Ile)-dependent editing activities. One activity is designated as 'pretransfer' editing and involves the hydrolysis of activated Val-AMP. The other activity is designated 'posttransfer' editing and involves deacylation of mischarged Val-tRNA(Ile). This chain is Isoleucine--tRNA ligase, found in Streptococcus pneumoniae (strain JJA).